The primary structure comprises 333 residues: Eukaryotic translation initiation factor 3 subunit I (333 aa).

WD repeat units follow at residues 8-47, 50-91, 144-183, and 186-225; these read GHERSITQIKYNREGDLLFTVAKDPIVNVWYSVNGERLGT, GHTG…ALLK, CNDSKITSAVWGPLGECIIAGHESGELNQYSAKSGEVLVN, and EHSRQINDIQLSREMTMFVTASKDNTAKLFDSTTLEHQKT. A Phosphothreonine modification is found at Thr219. Lys264 is subject to N6-acetyllysine. Residue Lys282 forms a Glycyl lysine isopeptide (Lys-Gly) (interchain with G-Cter in ubiquitin) linkage. One copy of the WD 5 repeat lies at 283–324; it reads GHFGPINSVAFHPDGKSYSSGGEDGYVRIHYFDPQYFEFEFE. Tyr308 carries the post-translational modification Phosphotyrosine.

This sequence belongs to the eIF-3 subunit I family. Component of the eukaryotic translation initiation factor 3 (eIF-3) complex, which is composed of 13 subunits: EIF3A, EIF3B, EIF3C, EIF3D, EIF3E, EIF3F, EIF3G, EIF3H, EIF3I, EIF3J, EIF3K, EIF3L and EIF3M. The eIF-3 complex appears to include 3 stable modules: module A is composed of EIF3A, EIF3B, EIF3G and EIF3I; module B is composed of EIF3F, EIF3H, and EIF3M; and module C is composed of EIF3C, EIF3D, EIF3E, EIF3K and EIF3L. EIF3C of module C binds EIF3B of module A and EIF3H of module B, thereby linking the three modules. EIF3J is a labile subunit that binds to the eIF-3 complex via EIF3B. The eIF-3 complex interacts with RPS6KB1 under conditions of nutrient depletion. Mitogenic stimulation leads to binding and activation of a complex composed of MTOR and RPTOR, leading to phosphorylation and release of RPS6KB1 and binding of EIF4B to eIF-3. Phosphorylated by TGF-beta type II receptor.

The protein localises to the cytoplasm. Component of the eukaryotic translation initiation factor 3 (eIF-3) complex, which is required for several steps in the initiation of protein synthesis. The eIF-3 complex associates with the 40S ribosome and facilitates the recruitment of eIF-1, eIF-1A, eIF-2:GTP:methionyl-tRNAi and eIF-5 to form the 43S pre-initiation complex (43S PIC). The eIF-3 complex stimulates mRNA recruitment to the 43S PIC and scanning of the mRNA for AUG recognition. The eIF-3 complex is also required for disassembly and recycling of post-termination ribosomal complexes and subsequently prevents premature joining of the 40S and 60S ribosomal subunits prior to initiation. The eIF-3 complex specifically targets and initiates translation of a subset of mRNAs involved in cell proliferation, including cell cycling, differentiation and apoptosis, and uses different modes of RNA stem-loop binding to exert either translational activation or repression. The protein is Eukaryotic translation initiation factor 3 subunit I of Oryctolagus cuniculus (Rabbit).